We begin with the raw amino-acid sequence, 61 residues long: Large ribosomal subunit protein uL30 (61 aa).

The protein belongs to the universal ribosomal protein uL30 family. In terms of assembly, part of the 50S ribosomal subunit.

This chain is Large ribosomal subunit protein uL30, found in Rubrobacter xylanophilus (strain DSM 9941 / JCM 11954 / NBRC 16129 / PRD-1).